Here is an 89-residue protein sequence, read N- to C-terminus: Small ribosomal subunit protein uS15 (89 aa).

Basic and acidic residues predominate over residues 1-13 (MTISKERKEEVIS). The segment at 1–24 (MTISKERKEEVISEHGAAAGDTGS) is disordered.

The protein belongs to the universal ribosomal protein uS15 family. Part of the 30S ribosomal subunit. Forms a bridge to the 50S subunit in the 70S ribosome, contacting the 23S rRNA.

Functionally, one of the primary rRNA binding proteins, it binds directly to 16S rRNA where it helps nucleate assembly of the platform of the 30S subunit by binding and bridging several RNA helices of the 16S rRNA. Its function is as follows. Forms an intersubunit bridge (bridge B4) with the 23S rRNA of the 50S subunit in the ribosome. In Rhodopirellula baltica (strain DSM 10527 / NCIMB 13988 / SH1), this protein is Small ribosomal subunit protein uS15.